Reading from the N-terminus, the 100-residue chain is Urease subunit gamma (100 aa).

It belongs to the urease gamma subunit family. In terms of assembly, heterotrimer of UreA (gamma), UreB (beta) and UreC (alpha) subunits. Three heterotrimers associate to form the active enzyme.

The protein localises to the cytoplasm. The catalysed reaction is urea + 2 H2O + H(+) = hydrogencarbonate + 2 NH4(+). Its pathway is nitrogen metabolism; urea degradation; CO(2) and NH(3) from urea (urease route): step 1/1. The polypeptide is Urease subunit gamma (Parasynechococcus marenigrum (strain WH8102)).